Consider the following 206-residue polypeptide: Threonine efflux protein (206 aa).

A helical transmembrane segment spans residues 1-21; the sequence is MMMLFFTVAMVHIVALMSPGP. Residues 22-43 lie on the Periplasmic side of the membrane; it reads DFFFVSQTAVSRSRKEAMMGVL. A helical transmembrane segment spans residues 44–64; it reads GITCGVMVWAGVALLGLHLII. Over 65-66 the chain is Cytoplasmic; that stretch reads EK. Residues 67–87 traverse the membrane as a helical segment; the sequence is MAWLHTIIMVGGGLYLCWMGY. Residues 88–149 lie on the Periplasmic side of the membrane; it reads QMLRGALKKQ…VGDNVGAAAR (62 aa). A helical transmembrane segment spans residues 150–173; the sequence is WGIFALITLETLAWFTVVASLFAL. Topologically, residues 174–206 are cytoplasmic; that stretch reads PKMRRGYQRLAKWIDGFAGALFAGFGIHLIISR.

This sequence belongs to the Rht family.

Its subcellular location is the cell inner membrane. Functionally, conducts the efflux of threonine. This Salmonella typhimurium (strain LT2 / SGSC1412 / ATCC 700720) protein is Threonine efflux protein (rhtC).